Here is a 459-residue protein sequence, read N- to C-terminus: Bifunctional protein GlmU (459 aa).

Positions 1–230 (MSNRFAVILA…FDETLGVNDR (230 aa)) are pyrophosphorylase. UDP-N-acetyl-alpha-D-glucosamine contacts are provided by residues 9–12 (LAAG), K23, Q73, and 78–79 (GT). D103 is a Mg(2+) binding site. Positions 140, 155, 170, and 228 each coordinate UDP-N-acetyl-alpha-D-glucosamine. Position 228 (N228) interacts with Mg(2+). The segment at 231 to 251 (VALSQAEIIMKNRINRKNMVN) is linker. The interval 252-459 (GVTIIDPSNT…VDQLLNKKKS (208 aa)) is N-acetyltransferase. Positions 333 and 351 each coordinate UDP-N-acetyl-alpha-D-glucosamine. The active-site Proton acceptor is the H363. UDP-N-acetyl-alpha-D-glucosamine-binding residues include Y366 and N377. Acetyl-CoA-binding positions include 386–387 (NY), A423, and R440.

It in the N-terminal section; belongs to the N-acetylglucosamine-1-phosphate uridyltransferase family. In the C-terminal section; belongs to the transferase hexapeptide repeat family. Homotrimer. Mg(2+) is required as a cofactor.

Its subcellular location is the cytoplasm. The enzyme catalyses alpha-D-glucosamine 1-phosphate + acetyl-CoA = N-acetyl-alpha-D-glucosamine 1-phosphate + CoA + H(+). The catalysed reaction is N-acetyl-alpha-D-glucosamine 1-phosphate + UTP + H(+) = UDP-N-acetyl-alpha-D-glucosamine + diphosphate. It participates in nucleotide-sugar biosynthesis; UDP-N-acetyl-alpha-D-glucosamine biosynthesis; N-acetyl-alpha-D-glucosamine 1-phosphate from alpha-D-glucosamine 6-phosphate (route II): step 2/2. It functions in the pathway nucleotide-sugar biosynthesis; UDP-N-acetyl-alpha-D-glucosamine biosynthesis; UDP-N-acetyl-alpha-D-glucosamine from N-acetyl-alpha-D-glucosamine 1-phosphate: step 1/1. The protein operates within bacterial outer membrane biogenesis; LPS lipid A biosynthesis. Catalyzes the last two sequential reactions in the de novo biosynthetic pathway for UDP-N-acetylglucosamine (UDP-GlcNAc). The C-terminal domain catalyzes the transfer of acetyl group from acetyl coenzyme A to glucosamine-1-phosphate (GlcN-1-P) to produce N-acetylglucosamine-1-phosphate (GlcNAc-1-P), which is converted into UDP-GlcNAc by the transfer of uridine 5-monophosphate (from uridine 5-triphosphate), a reaction catalyzed by the N-terminal domain. This Bacillus mycoides (strain KBAB4) (Bacillus weihenstephanensis) protein is Bifunctional protein GlmU.